A 240-amino-acid polypeptide reads, in one-letter code: UDP-2,3-diacylglucosamine hydrolase (240 aa).

5 residues coordinate Mn(2+): Asp-7, His-9, Asp-40, Asn-78, and His-113. 78–79 is a binding site for substrate; sequence NR. Substrate contacts are provided by Asp-121, Ser-159, Thr-163, Lys-166, and His-194. Mn(2+) contacts are provided by His-194 and His-196.

Belongs to the LpxH family. Mn(2+) is required as a cofactor.

Its subcellular location is the cell inner membrane. The catalysed reaction is UDP-2-N,3-O-bis[(3R)-3-hydroxytetradecanoyl]-alpha-D-glucosamine + H2O = 2-N,3-O-bis[(3R)-3-hydroxytetradecanoyl]-alpha-D-glucosaminyl 1-phosphate + UMP + 2 H(+). The protein operates within glycolipid biosynthesis; lipid IV(A) biosynthesis; lipid IV(A) from (3R)-3-hydroxytetradecanoyl-[acyl-carrier-protein] and UDP-N-acetyl-alpha-D-glucosamine: step 4/6. Functionally, hydrolyzes the pyrophosphate bond of UDP-2,3-diacylglucosamine to yield 2,3-diacylglucosamine 1-phosphate (lipid X) and UMP by catalyzing the attack of water at the alpha-P atom. Involved in the biosynthesis of lipid A, a phosphorylated glycolipid that anchors the lipopolysaccharide to the outer membrane of the cell. This is UDP-2,3-diacylglucosamine hydrolase from Pseudomonas putida (strain W619).